A 400-amino-acid polypeptide reads, in one-letter code: uncharacterized protein (400 aa).

The protein to M.jannaschii MJ1544 and MJ1637.

This is an uncharacterized protein from Haemophilus influenzae (strain ATCC 51907 / DSM 11121 / KW20 / Rd).